The sequence spans 93 residues: Large ribosomal subunit protein uL23cz/uL23cy (93 aa).

The protein belongs to the universal ribosomal protein uL23 family. As to quaternary structure, part of the 50S ribosomal subunit.

It is found in the plastid. The protein localises to the chloroplast. In terms of biological role, binds to 23S rRNA. The sequence is that of Large ribosomal subunit protein uL23cz/uL23cy (rpl23-A) from Lactuca sativa (Garden lettuce).